The primary structure comprises 276 residues: Rhomboid protease GlpG (276 aa).

A run of 6 helical transmembrane segments spans residues 94–114, 142–162, 169–189, 192–212, 229–249, and 250–270; these read GPVTWVMMIACVVVFIAMQIL, ALMHFSLMHILFNLLWWWYLG, LGSGKLIVITLISALLSGYVQ, FSGPWFGGLSGVVYALMGYVW, LIIFALIWIVAGWFDLFGMSM, and ANGAHIAGLAVGLAMAFVDSL. S201 functions as the Nucleophile in the catalytic mechanism. H254 is a catalytic residue.

The protein belongs to the peptidase S54 family.

It is found in the cell inner membrane. The catalysed reaction is Cleaves type-1 transmembrane domains using a catalytic dyad composed of serine and histidine that are contributed by different transmembrane domains.. Functionally, rhomboid-type serine protease that catalyzes intramembrane proteolysis. In Shigella flexneri serotype 5b (strain 8401), this protein is Rhomboid protease GlpG.